The primary structure comprises 412 residues: Alanyl-tRNA editing protein Aarsd1 (412 aa).

Zn(2+) is bound by residues His-109 and His-113. Ser-174 bears the Phosphoserine mark. 2 residues coordinate Zn(2+): Cys-209 and His-213.

Belongs to the class-II aminoacyl-tRNA synthetase family. Alax-L subfamily. It depends on Zn(2+) as a cofactor.

The protein resides in the cytoplasm. In terms of biological role, functions in trans to edit the amino acid moiety from incorrectly charged Ser-tRNA(Ala). This chain is Alanyl-tRNA editing protein Aarsd1 (Aarsd1), found in Mus musculus (Mouse).